Here is a 548-residue protein sequence, read N- to C-terminus: Lipase 2 (548 aa).

The N-terminal stretch at 1-14 (MKLCLLALGAAVAA) is a signal peptide. The cysteines at positions 74 and 111 are disulfide-linked. The Acyl-ester intermediate role is filled by serine 223. Cysteine 282 and cysteine 291 form a disulfide bridge. The Charge relay system role is filled by glutamate 355. N-linked (GlcNAc...) asparagine glycosylation occurs at asparagine 365. Histidine 463 functions as the Charge relay system in the catalytic mechanism.

It belongs to the type-B carboxylesterase/lipase family.

The enzyme catalyses a triacylglycerol + H2O = a diacylglycerol + a fatty acid + H(+). The sequence is that of Lipase 2 (LIP2) from Diutina rugosa (Yeast).